A 505-amino-acid polypeptide reads, in one-letter code: Ikaros family zinc finger protein (505 aa).

4 consecutive C2H2-type zinc fingers follow at residues 18 to 40 (LTCE…KRSH), 46 to 68 (FQCN…VKLH), 74 to 96 (FKCS…IRTH), and 102 to 128 (YKCN…PGFH). 2 stretches are compositionally biased toward polar residues: residues 262 to 273 (FLNTPSPVTRSA) and 309 to 327 (RFQH…SQQP). Disordered regions lie at residues 262 to 296 (FLNT…DIGS) and 309 to 440 (RFQH…VSGS). Gly residues predominate over residues 336-345 (ILGGSLGGIC). Over residues 366–377 (ATSSPSNSCPDS) the composition is skewed to polar residues. Residues 393–406 (GSGSSTSRPNGSTG) are compositionally biased toward low complexity. The span at 409 to 419 (HRPEMHQDNGR) shows a compositional bias: basic and acidic residues. Residues 424–439 (SGASDSSSLPTYNVSG) show a composition bias toward polar residues. 2 consecutive C2H2-type zinc fingers follow at residues 448–470 (YPCH…MGCH) and 476–500 (FECN…RGEH).

This sequence belongs to the Ikaros C2H2-type zinc-finger protein family. In terms of assembly, heterodimer and homodimer with other IKAROS family members. In terms of tissue distribution, expression is strongest in the blood, gills and intestine.

It localises to the nucleus. In Myxine glutinosa (Atlantic hagfish), this protein is Ikaros family zinc finger protein.